The following is a 354-amino-acid chain: MRVTDFSFELPESLIAHYPQPERSRCRLLSLEGPTGALTHGTFTDLLDKLNPGDLLVFNNTRVIPARLFGRKASGGKIEVLVERMLDDKRILAHIRASKAPKPGTELLLGDDESIHATMTARHGALFEVEFNDPRPVLDILNAIGHMPLPPYIDRPDEDADRELYQTVYSEKPGAVAAPTAGLHFDEPLLAALREKGVEMAFVTLHVGAGTFQPVRVDTIEDHIMHSEYAEVPQEVVDAVLAAKARGNRVIAVGTTSVRSLESAAQAAKSDLIEPFFGDTQIFIYPGYQYKVIDALITNFHLPESTLIMLVSAFAGYQHTMNAYKTAVEQKYRFFSYGDAMFITYNPQAISERP.

Belongs to the QueA family. As to quaternary structure, monomer.

The protein localises to the cytoplasm. The catalysed reaction is 7-aminomethyl-7-carbaguanosine(34) in tRNA + S-adenosyl-L-methionine = epoxyqueuosine(34) in tRNA + adenine + L-methionine + 2 H(+). Its pathway is tRNA modification; tRNA-queuosine biosynthesis. Its function is as follows. Transfers and isomerizes the ribose moiety from AdoMet to the 7-aminomethyl group of 7-deazaguanine (preQ1-tRNA) to give epoxyqueuosine (oQ-tRNA). In Salmonella heidelberg (strain SL476), this protein is S-adenosylmethionine:tRNA ribosyltransferase-isomerase.